The sequence spans 392 residues: Cytochrome b (392 aa).

Transmembrane regions (helical) follow at residues 38–58, 82–104, 119–139, and 185–205; these read FGSL…FLAM, WLLR…LHIF, VRCL…TGYV, and FFSL…LHLA. The heme b site is built by His-88 and His-102. Positions 189 and 203 each coordinate heme b. Residue His-208 coordinates a ubiquinone. Helical transmembrane passes span 231-251, 295-315, 327-347, and 354-373; these read FYVK…IWIF, SGGV…PFFK, IHQG…WIGC, and FVTI…AITP.

This sequence belongs to the cytochrome b family. As to quaternary structure, the main subunits of complex b-c1 are: cytochrome b, cytochrome c1 and the Rieske protein. Requires heme b as cofactor.

Its subcellular location is the mitochondrion inner membrane. Its function is as follows. Component of the ubiquinol-cytochrome c reductase complex (complex III or cytochrome b-c1 complex) that is part of the mitochondrial respiratory chain. The b-c1 complex mediates electron transfer from ubiquinol to cytochrome c. Contributes to the generation of a proton gradient across the mitochondrial membrane that is then used for ATP synthesis. This is Cytochrome b (MT-CYB) from Vicia faba (Broad bean).